We begin with the raw amino-acid sequence, 361 residues long: Holliday junction branch migration complex subunit RuvB (361 aa).

The disordered stretch occupies residues 1-25; it reads MSIHTDDFGQGGFAQGGFPPDKAPD. Residues 5–207 are large ATPase domain (RuvB-L); sequence TDDFGQGGFA…FGIVARLEFY (203 aa). ATP-binding positions include L46, R47, G88, K91, T92, T93, 154-156, R197, Y207, and R244; that span reads EDY. T92 contacts Mg(2+). The tract at residues 208–278 is small ATPAse domain (RuvB-S); that stretch reads TAEELARIVR…LADRALAMLD (71 aa). A head domain (RuvB-H) region spans residues 281 to 361; it reads PQGFDIMDRK…GLPVPGDDAS (81 aa). The DNA site is built by R336 and R341.

It belongs to the RuvB family. Homohexamer. Forms an RuvA(8)-RuvB(12)-Holliday junction (HJ) complex. HJ DNA is sandwiched between 2 RuvA tetramers; dsDNA enters through RuvA and exits via RuvB. An RuvB hexamer assembles on each DNA strand where it exits the tetramer. Each RuvB hexamer is contacted by two RuvA subunits (via domain III) on 2 adjacent RuvB subunits; this complex drives branch migration. In the full resolvosome a probable DNA-RuvA(4)-RuvB(12)-RuvC(2) complex forms which resolves the HJ.

The protein resides in the cytoplasm. It catalyses the reaction ATP + H2O = ADP + phosphate + H(+). The RuvA-RuvB-RuvC complex processes Holliday junction (HJ) DNA during genetic recombination and DNA repair, while the RuvA-RuvB complex plays an important role in the rescue of blocked DNA replication forks via replication fork reversal (RFR). RuvA specifically binds to HJ cruciform DNA, conferring on it an open structure. The RuvB hexamer acts as an ATP-dependent pump, pulling dsDNA into and through the RuvAB complex. RuvB forms 2 homohexamers on either side of HJ DNA bound by 1 or 2 RuvA tetramers; 4 subunits per hexamer contact DNA at a time. Coordinated motions by a converter formed by DNA-disengaged RuvB subunits stimulates ATP hydrolysis and nucleotide exchange. Immobilization of the converter enables RuvB to convert the ATP-contained energy into a lever motion, pulling 2 nucleotides of DNA out of the RuvA tetramer per ATP hydrolyzed, thus driving DNA branch migration. The RuvB motors rotate together with the DNA substrate, which together with the progressing nucleotide cycle form the mechanistic basis for DNA recombination by continuous HJ branch migration. Branch migration allows RuvC to scan DNA until it finds its consensus sequence, where it cleaves and resolves cruciform DNA. The sequence is that of Holliday junction branch migration complex subunit RuvB from Delftia acidovorans (strain DSM 14801 / SPH-1).